Reading from the N-terminus, the 112-residue chain is Divalent-cation tolerance protein CutA (112 aa).

Cu cation-binding residues include C16, H83, and H84.

The protein belongs to the CutA family. Homotrimer. The cofactor is Cu cation.

The protein localises to the cytoplasm. Functionally, involved in resistance toward heavy metals. In Escherichia coli O81 (strain ED1a), this protein is Divalent-cation tolerance protein CutA.